Here is a 263-residue protein sequence, read N- to C-terminus: 4-hydroxy-2-oxo-heptane-1,7-dioate aldolase (263 aa).

The Proton acceptor role is filled by His45. Substrate is bound at residue Gln147. Glu149 provides a ligand contact to a divalent metal cation. 2 residues coordinate substrate: Ala174 and Asp175. Asp175 contacts a divalent metal cation.

This sequence belongs to the HpcH/HpaI aldolase family. As to quaternary structure, homohexamer; trimer of dimers. Requires a divalent metal cation as cofactor.

It catalyses the reaction 4-hydroxy-2-oxoheptanedioate = succinate semialdehyde + pyruvate. It functions in the pathway aromatic compound metabolism; 4-hydroxyphenylacetate degradation; pyruvate and succinate semialdehyde from 4-hydroxyphenylacetate: step 7/7. Its function is as follows. Catalyzes the reversible retro-aldol cleavage of 4-hydroxy-2-ketoheptane-1,7-dioate (HKHD) to pyruvate and succinic semialdehyde. The polypeptide is 4-hydroxy-2-oxo-heptane-1,7-dioate aldolase (Salmonella dublin (strain CT_02021853)).